Reading from the N-terminus, the 243-residue chain is Type II restriction enzyme NlaIV (243 aa).

The enzyme catalyses Endonucleolytic cleavage of DNA to give specific double-stranded fragments with terminal 5'-phosphates.. Its function is as follows. A P subtype restriction enzyme that recognizes the double-stranded sequence 5'-GGNNCC-3' and cleaves after N-3. The polypeptide is Type II restriction enzyme NlaIV (nlaIVR) (Neisseria lactamica).